A 692-amino-acid chain; its full sequence is uncharacterized protein (692 aa).

2 consecutive Response regulatory domains span residues 9 to 130 and 139 to 255; these read RVLY…LRMC and RILI…EYRM. A 4-aspartylphosphate mark is found at D58 and D188. Positions 299–432 constitute a GGDEF domain; the sequence is GVHGLVIIDV…GGNQAHVWSA (134 aa). Positions 443–691 constitute an EAL domain; sequence ESVIKRLVST…SFDFQHMSHD (249 aa).

This is an uncharacterized protein from Thiocystis violacea.